The chain runs to 88 residues: UPF0297 protein RBAM_024500 (88 aa).

It belongs to the UPF0297 family.

In Bacillus velezensis (strain DSM 23117 / BGSC 10A6 / LMG 26770 / FZB42) (Bacillus amyloliquefaciens subsp. plantarum), this protein is UPF0297 protein RBAM_024500.